The following is a 226-amino-acid chain: NAD(P)H-hydrate epimerase (226 aa).

The YjeF N-terminal domain maps to 10 to 215 (AIELDLDLFE…ALQRKYQLNL (206 aa)). Residue 58–62 (NNGGD) participates in (6S)-NADPHX binding. K(+)-binding residues include Asn59 and Asp123. (6S)-NADPHX-binding positions include 127-133 (GFGFKPP) and Asp156. Ser159 serves as a coordination point for K(+).

It belongs to the NnrE/AIBP family. The cofactor is K(+).

The catalysed reaction is (6R)-NADHX = (6S)-NADHX. The enzyme catalyses (6R)-NADPHX = (6S)-NADPHX. Catalyzes the epimerization of the S- and R-forms of NAD(P)HX, a damaged form of NAD(P)H that is a result of enzymatic or heat-dependent hydration. This is a prerequisite for the S-specific NAD(P)H-hydrate dehydratase to allow the repair of both epimers of NAD(P)HX. The chain is NAD(P)H-hydrate epimerase from Drosophila pseudoobscura pseudoobscura (Fruit fly).